The primary structure comprises 133 residues: MELEFPEDLRYLDSHEYIRLDGEIATIGISAYAIEQLGDLVFLELPEVGDSLERGSSFGSIESVKAAEDLYPPVSGTVIDRNEAMIETPEVIADDPYGDGWLLKVRVENPDDELEDTLSAHDYRAMLEGEEGI.

One can recognise a Lipoyl-binding domain in the interval 24–106 (IATIGISAYA…YGDGWLLKVR (83 aa)). K65 bears the N6-lipoyllysine mark.

Belongs to the GcvH family. As to quaternary structure, the glycine cleavage system is composed of four proteins: P, T, L and H. (R)-lipoate serves as cofactor.

Its function is as follows. The glycine cleavage system catalyzes the degradation of glycine. The H protein shuttles the methylamine group of glycine from the P protein to the T protein. The chain is Glycine cleavage system H protein from Crocosphaera subtropica (strain ATCC 51142 / BH68) (Cyanothece sp. (strain ATCC 51142)).